The following is a 509-amino-acid chain: Photosystem II CP47 reaction center protein (509 aa).

6 helical membrane-spanning segments follow: residues 21 to 36, 101 to 115, 140 to 156, 203 to 218, 237 to 252, and 457 to 472; these read AVHLMHTALVAGWAGS, IGLSGLLFLAAIWHW, GIHLFLSGLLCFGFGAF, IAAGIVGILAGLFHLS, VLSSSISAVFFAAFIV, and SFALIFFFGHLWHGGR.

It belongs to the PsbB/PsbC family. PsbB subfamily. In terms of assembly, PSII is composed of 1 copy each of membrane proteins PsbA, PsbB, PsbC, PsbD, PsbE, PsbF, PsbH, PsbI, PsbJ, PsbK, PsbL, PsbM, PsbT, PsbX, PsbY, PsbZ, Psb30/Ycf12, at least 3 peripheral proteins of the oxygen-evolving complex and a large number of cofactors. It forms dimeric complexes. Requires Binds multiple chlorophylls. PSII binds additional chlorophylls, carotenoids and specific lipids. as cofactor.

It is found in the plastid. The protein resides in the cyanelle thylakoid membrane. In terms of biological role, one of the components of the core complex of photosystem II (PSII). It binds chlorophyll and helps catalyze the primary light-induced photochemical processes of PSII. PSII is a light-driven water:plastoquinone oxidoreductase, using light energy to abstract electrons from H(2)O, generating O(2) and a proton gradient subsequently used for ATP formation. The sequence is that of Photosystem II CP47 reaction center protein from Cyanophora paradoxa.